We begin with the raw amino-acid sequence, 82 residues long: Cytochrome b559 subunit alpha (82 aa).

A helical transmembrane segment spans residues 22–36; it reads IIHAVALPAIFVAGF. Histidine 24 provides a ligand contact to heme.

This sequence belongs to the PsbE/PsbF family. As to quaternary structure, heterodimer of an alpha subunit and a beta subunit. PSII is composed of 1 copy each of membrane proteins PsbA, PsbB, PsbC, PsbD, PsbE, PsbF, PsbH, PsbI, PsbJ, PsbK, PsbL, PsbM, PsbT, PsbX, PsbY, Psb30/Ycf12, peripheral proteins PsbO, CyanoQ (PsbQ), PsbU, PsbV and a large number of cofactors. It forms dimeric complexes. The cofactor is heme b.

It localises to the cellular thylakoid membrane. In terms of biological role, this b-type cytochrome is tightly associated with the reaction center of photosystem II (PSII). PSII is a light-driven water:plastoquinone oxidoreductase that uses light energy to abstract electrons from H(2)O, generating O(2) and a proton gradient subsequently used for ATP formation. It consists of a core antenna complex that captures photons, and an electron transfer chain that converts photonic excitation into a charge separation. This Prochlorococcus marinus (strain NATL1A) protein is Cytochrome b559 subunit alpha.